A 119-amino-acid chain; its full sequence is Large ribosomal subunit protein bL20 (119 aa).

It belongs to the bacterial ribosomal protein bL20 family.

Functionally, binds directly to 23S ribosomal RNA and is necessary for the in vitro assembly process of the 50S ribosomal subunit. It is not involved in the protein synthesizing functions of that subunit. The polypeptide is Large ribosomal subunit protein bL20 (Streptococcus gordonii (strain Challis / ATCC 35105 / BCRC 15272 / CH1 / DL1 / V288)).